The chain runs to 251 residues: Phosphate import ATP-binding protein PstB (251 aa).

In terms of domain architecture, ABC transporter spans isoleucine 5–leucine 246. Glycine 37–threonine 44 contacts ATP.

The protein belongs to the ABC transporter superfamily. Phosphate importer (TC 3.A.1.7) family. The complex is composed of two ATP-binding proteins (PstB), two transmembrane proteins (PstC and PstA) and a solute-binding protein (PstS).

Its subcellular location is the cell inner membrane. The catalysed reaction is phosphate(out) + ATP + H2O = ADP + 2 phosphate(in) + H(+). In terms of biological role, part of the ABC transporter complex PstSACB involved in phosphate import. Responsible for energy coupling to the transport system. The chain is Phosphate import ATP-binding protein PstB from Thermotoga maritima (strain ATCC 43589 / DSM 3109 / JCM 10099 / NBRC 100826 / MSB8).